Here is a 624-residue protein sequence, read N- to C-terminus: Chaperone protein DnaK (624 aa).

Threonine 174 is modified (phosphothreonine; by autocatalysis). 2 disordered regions span residues 544–563 (KKAQ…DDLS) and 576–624 (NAQK…DDKK). The segment covering 581–600 (QQAQGGPASGAATDAGAAQG) has biased composition (low complexity). Positions 601-624 (SDDKKSDDDTINGDYKDVSDDDKK) are enriched in basic and acidic residues.

It belongs to the heat shock protein 70 family.

In terms of biological role, acts as a chaperone. The chain is Chaperone protein DnaK from Lacticaseibacillus casei (strain BL23) (Lactobacillus casei).